A 271-amino-acid chain; its full sequence is 3-deoxy-manno-octulosonate cytidylyltransferase (271 aa).

The protein belongs to the KdsB family.

It is found in the cytoplasm. It carries out the reaction 3-deoxy-alpha-D-manno-oct-2-ulosonate + CTP = CMP-3-deoxy-beta-D-manno-octulosonate + diphosphate. The protein operates within nucleotide-sugar biosynthesis; CMP-3-deoxy-D-manno-octulosonate biosynthesis; CMP-3-deoxy-D-manno-octulosonate from 3-deoxy-D-manno-octulosonate and CTP: step 1/1. It functions in the pathway bacterial outer membrane biogenesis; lipopolysaccharide biosynthesis. In terms of biological role, activates KDO (a required 8-carbon sugar) for incorporation into bacterial lipopolysaccharide in Gram-negative bacteria. This Leptothrix cholodnii (strain ATCC 51168 / LMG 8142 / SP-6) (Leptothrix discophora (strain SP-6)) protein is 3-deoxy-manno-octulosonate cytidylyltransferase.